Here is a 224-residue protein sequence, read N- to C-terminus: MSALGAPAPYLHHPTDSHSGRVSFLGSQPSAEVTAVAQLLKDLDRSTFRKLLKLVVGALHGKDCREAVQHLGASANLSEERLAVLLAGTHTLLQQALRLPPASLKPDAFQDELQELGIPQDMIGDLASLAFGSQRPLLDSVAQQQGSSLPRVSNFRWRVDVAISTSAQSRSLQPSVLMQLKLTDGSAHRFEVPIAKFQELRYSVALVLKEMAELERKCERKLQD.

The disordered stretch occupies residues 1–24; that stretch reads MSALGAPAPYLHHPTDSHSGRVSF. S2 is modified (N-acetylserine). Positions 151 to 215 constitute a COMM domain; sequence RVSNFRWRVD…LVLKEMAELE (65 aa).

It belongs to the COMM domain-containing protein 5 family. Component of the commander complex consisting of the CCC subcomplex and the retriever subcomplex. Component of the CCC (COMMD/CCDC22/CCDC93) subcomplex consisting of COMMD1, COMMD2, COMMD3, COMMD4, COMMD5, COMMD6, COMMD7, COMMD8, COMMD9, COMMD10, CCDC22 and CCDC93; within the complex forms a heterodimer with COMMD10. Interacts (via COMM domain) with COMMD1 (via COMM domain). Interacts with RELA, RELB, NFKB1/p105. Interacts with CCDC22, CCDC93, SCNN1B, CUL2, CUL3, CUL4A, CUL4B, CUL7.

The protein resides in the nucleus. The protein localises to the cytoplasm. Functionally, scaffold protein in the commander complex that is essential for endosomal recycling of transmembrane cargos; the commander complex is composed of the CCC subcomplex and the retriever subcomplex. May modulate activity of cullin-RING E3 ubiquitin ligase (CRL) complexes. Negatively regulates cell proliferation. Negatively regulates cell cycle G2/M phase transition probably by transactivating p21/CDKN1A through the p53/TP53-independent signaling pathway. Involved in kidney proximal tubule morphogenesis. Down-regulates activation of NF-kappa-B. This Mus musculus (Mouse) protein is COMM domain-containing protein 5 (Commd5).